Here is a 66-residue protein sequence, read N- to C-terminus: Beta-toxin Cbo2 (66 aa).

The LCN-type CS-alpha/beta domain maps to 1-66 (KEGYIVNYHD…VWPLPKKTCN (66 aa)). Disulfide bonds link C12/C65, C16/C41, C25/C46, and C29/C48. The residue at position 66 (N66) is an Asparagine amide.

This sequence belongs to the long (4 C-C) scorpion toxin superfamily. Sodium channel inhibitor family. Beta subfamily. As to expression, expressed by the venom gland.

It is found in the secreted. Functionally, beta toxins bind voltage-independently at site-4 of sodium channels and shift the voltage of activation toward more negative potentials thereby affecting sodium channel activation and promoting spontaneous and repetitive firing. A mixture of Cbo2 and Cbo3 is weakly active on the human voltage-gated sodium channels Nav1.4/SCN4A and Nav1.6/SCN8A when tested at 200 nM. In vivo, is toxic to mice when intraperitoneally injected. This Centruroides bonito (Scorpion) protein is Beta-toxin Cbo2.